We begin with the raw amino-acid sequence, 223 residues long: V-type ATP synthase subunit D (223 aa).

The disordered stretch occupies residues 203–223 (AREAEEEGGRPNPQVEIGAGL).

The protein belongs to the V-ATPase D subunit family.

In terms of biological role, produces ATP from ADP in the presence of a proton gradient across the membrane. The protein is V-type ATP synthase subunit D of Thermus thermophilus (strain ATCC BAA-163 / DSM 7039 / HB27).